We begin with the raw amino-acid sequence, 397 residues long: Riboflavin biosynthesis protein RibBA (397 aa).

A DHBP synthase region spans residues methionine 1–histidine 199. Residues arginine 26–glutamate 27, aspartate 31, arginine 138–threonine 142, and glutamate 162 each bind D-ribulose 5-phosphate. Residue glutamate 27 coordinates Mg(2+). Residue histidine 141 participates in Mg(2+) binding. The interval histidine 200–leucine 397 is GTP cyclohydrolase II. Position 250 to 254 (arginine 250 to glutamate 254) interacts with GTP. Zn(2+)-binding residues include cysteine 255, cysteine 266, and cysteine 268. GTP-binding positions include glutamine 271, glutamate 293–arginine 295, and threonine 315. Aspartate 327 serves as the catalytic Proton acceptor; for GTP cyclohydrolase activity. Arginine 329 (nucleophile; for GTP cyclohydrolase activity) is an active-site residue. Residues threonine 350 and lysine 355 each coordinate GTP.

It in the N-terminal section; belongs to the DHBP synthase family. The protein in the C-terminal section; belongs to the GTP cyclohydrolase II family. Mg(2+) serves as cofactor. The cofactor is Mn(2+). It depends on Zn(2+) as a cofactor.

The enzyme catalyses D-ribulose 5-phosphate = (2S)-2-hydroxy-3-oxobutyl phosphate + formate + H(+). The catalysed reaction is GTP + 4 H2O = 2,5-diamino-6-hydroxy-4-(5-phosphoribosylamino)-pyrimidine + formate + 2 phosphate + 3 H(+). The protein operates within cofactor biosynthesis; riboflavin biosynthesis; 2-hydroxy-3-oxobutyl phosphate from D-ribulose 5-phosphate: step 1/1. It functions in the pathway cofactor biosynthesis; riboflavin biosynthesis; 5-amino-6-(D-ribitylamino)uracil from GTP: step 1/4. In terms of biological role, catalyzes the conversion of D-ribulose 5-phosphate to formate and 3,4-dihydroxy-2-butanone 4-phosphate. Its function is as follows. Catalyzes the conversion of GTP to 2,5-diamino-6-ribosylamino-4(3H)-pyrimidinone 5'-phosphate (DARP), formate and pyrophosphate. The chain is Riboflavin biosynthesis protein RibBA from Bacillus cereus (strain ATCC 10987 / NRS 248).